The chain runs to 37 residues: MRVSASVKKICRNCKIIRRKGVVRVICTDMRHKQRQG.

It belongs to the bacterial ribosomal protein bL36 family.

This is Large ribosomal subunit protein bL36 from Paracidovorax citrulli (strain AAC00-1) (Acidovorax citrulli).